Reading from the N-terminus, the 542-residue chain is CTP synthase (542 aa).

Residues 1–265 (MARYVFITGG…DNEVLAAFGI (265 aa)) are amidoligase domain. Position 13 (serine 13) interacts with CTP. Residue serine 13 coordinates UTP. ATP contacts are provided by residues 14 to 19 (SLGKGI) and aspartate 71. Aspartate 71 and glutamate 139 together coordinate Mg(2+). CTP contacts are provided by residues 146–148 (DIE), 186–191 (KTKPTQ), and lysine 222. UTP is bound by residues 186–191 (KTKPTQ) and lysine 222. One can recognise a Glutamine amidotransferase type-1 domain in the interval 291–541 (TIAIVGKYTG…IEAALEQSRL (251 aa)). Glycine 353 provides a ligand contact to L-glutamine. Cysteine 380 acts as the Nucleophile; for glutamine hydrolysis in catalysis. Residues 381-384 (FGMQ), glutamate 404, and arginine 469 each bind L-glutamine. Residues histidine 514 and glutamate 516 contribute to the active site.

This sequence belongs to the CTP synthase family. In terms of assembly, homotetramer.

It catalyses the reaction UTP + L-glutamine + ATP + H2O = CTP + L-glutamate + ADP + phosphate + 2 H(+). It carries out the reaction L-glutamine + H2O = L-glutamate + NH4(+). The catalysed reaction is UTP + NH4(+) + ATP = CTP + ADP + phosphate + 2 H(+). Its pathway is pyrimidine metabolism; CTP biosynthesis via de novo pathway; CTP from UDP: step 2/2. Its activity is regulated as follows. Allosterically activated by GTP, when glutamine is the substrate; GTP has no effect on the reaction when ammonia is the substrate. The allosteric effector GTP functions by stabilizing the protein conformation that binds the tetrahedral intermediate(s) formed during glutamine hydrolysis. Inhibited by the product CTP, via allosteric rather than competitive inhibition. Its function is as follows. Catalyzes the ATP-dependent amination of UTP to CTP with either L-glutamine or ammonia as the source of nitrogen. Regulates intracellular CTP levels through interactions with the four ribonucleotide triphosphates. This Sinorhizobium medicae (strain WSM419) (Ensifer medicae) protein is CTP synthase.